The primary structure comprises 197 residues: Imidazoleglycerol-phosphate dehydratase (197 aa).

This sequence belongs to the imidazoleglycerol-phosphate dehydratase family.

The protein localises to the cytoplasm. The catalysed reaction is D-erythro-1-(imidazol-4-yl)glycerol 3-phosphate = 3-(imidazol-4-yl)-2-oxopropyl phosphate + H2O. It participates in amino-acid biosynthesis; L-histidine biosynthesis; L-histidine from 5-phospho-alpha-D-ribose 1-diphosphate: step 6/9. The polypeptide is Imidazoleglycerol-phosphate dehydratase (Alkalilimnicola ehrlichii (strain ATCC BAA-1101 / DSM 17681 / MLHE-1)).